The primary structure comprises 322 residues: Protease HtpX homolog (322 aa).

2 consecutive transmembrane segments (helical) span residues 19–39 (ILLILFPCLVAVLTYLFCYLL) and 61–81 (FINLIPYIIGGVLVWFIIAYF). H165 contributes to the Zn(2+) binding site. The active site involves E166. H169 is a binding site for Zn(2+). The next 2 membrane-spanning stretches (helical) occupy residues 175 to 195 (VRLLIISIVFVGIFSMLAQIA) and 216 to 236 (ILILVLAMIVAAIGYFFATLM). E245 provides a ligand contact to Zn(2+).

This sequence belongs to the peptidase M48B family. Requires Zn(2+) as cofactor.

It is found in the cell inner membrane. The chain is Protease HtpX homolog from Bacteroides fragilis (strain ATCC 25285 / DSM 2151 / CCUG 4856 / JCM 11019 / LMG 10263 / NCTC 9343 / Onslow / VPI 2553 / EN-2).